The following is a 388-amino-acid chain: Probable proton-coupled zinc antiporter SLC30A3 (388 aa).

Residues 1 to 13 (MEPSPTTGGSETT) show a composition bias toward polar residues. Disordered stretches follow at residues 1–30 (MEPS…GLRL) and 35–54 (TEAP…SFHH). The Cytoplasmic segment spans residues 1-75 (MEPSPTTGGS…TPERMQAQRQ (75 aa)). A helical transmembrane segment spans residues 76–96 (LCTACAVCCVFMAGEVVGGYL). Residues 97–105 (AHSLAIMTD) lie on the Lumenal side of the membrane. Residues 106-126 (AAHLLADVGSMMGSLFSLWLS) form a helical membrane-spanning segment. Positions 108 and 112 each coordinate Zn(2+). At 127-145 (TRPATRTMTFGWHRSETLG) the chain is on the cytoplasmic side. The chain crosses the membrane as a helical span at residues 146–166 (ALASVVSLWMVTGILLYLAFI). At 167-177 (RLLHSDYHIEG) the chain is on the lumenal side. The chain crosses the membrane as a helical span at residues 178 to 198 (GAMLLTASIAVCANLLMAFVL). Topologically, residues 199–235 (HQAGPPHSHGSRGAEYAPLEEGSGEPLPLGNTSVRAA) are cytoplasmic. The chain crosses the membrane as a helical span at residues 236-256 (FVHVLGDLLQSLGVLIASILI). Residues His238 and Asp242 each contribute to the Zn(2+) site. Topologically, residues 257 to 264 (YFKPQYKA) are lumenal. A helical transmembrane segment spans residues 265-285 (ADPISTFLFSICALGSTAPTL). At 286-388 (RDVLRVLMEG…CLRCQEPPQA (103 aa)) the chain is on the cytoplasmic side.

The protein belongs to the cation diffusion facilitator (CDF) transporter (TC 2.A.4) family. SLC30A subfamily. In terms of assembly, homodimer. Homodimerization could regulate efficiency of zinc transport. Interacts with TMEM163.

The protein resides in the cytoplasmic vesicle. It localises to the secretory vesicle. Its subcellular location is the synaptic vesicle membrane. It is found in the synapse. The protein localises to the synaptosome. The protein resides in the late endosome membrane. It localises to the lysosome membrane. The catalysed reaction is Zn(2+)(in) + 2 H(+)(out) = Zn(2+)(out) + 2 H(+)(in). Its function is as follows. Probable proton-coupled zinc ion antiporter mediating the import of zinc from cytoplasm into synaptic vesicles and participating to cellular zinc ion homeostasis in the brain. This is Probable proton-coupled zinc antiporter SLC30A3 from Bos taurus (Bovine).